Consider the following 139-residue polypeptide: Peptide methionine sulfoxide reductase MsrB (139 aa).

A MsrB domain is found at 9-131; it reads TPSDNTELTE…NSASLSFIDD (123 aa). Residues C48, C51, C97, and C100 each coordinate Zn(2+). C120 (nucleophile) is an active-site residue.

Belongs to the MsrB Met sulfoxide reductase family. Requires Zn(2+) as cofactor.

The enzyme catalyses L-methionyl-[protein] + [thioredoxin]-disulfide + H2O = L-methionyl-(R)-S-oxide-[protein] + [thioredoxin]-dithiol. The polypeptide is Peptide methionine sulfoxide reductase MsrB (Pectobacterium carotovorum subsp. carotovorum (strain PC1)).